We begin with the raw amino-acid sequence, 1104 residues long: Inhibitory regulator protein BUD2/CLA2 (1104 aa).

Ser2 bears the N-acetylserine mark. The 129-residue stretch at 316-444 (RSEYLSITGS…RYNKETRLPI (129 aa)) folds into the C2 domain. Residues 536–753 (AKIDGTVSRI…NDLLDYIDKM (218 aa)) enclose the Ras-GAP domain. At Ser854 the chain carries Phosphoserine. Residues 1027 to 1104 (NPKSSNKTSV…FKKKKETGGS (78 aa)) are disordered. Composition is skewed to polar residues over residues 1029–1043 (KSSNKTSVHGTSSEN) and 1052–1069 (LPNSQGKGNLGNRFSPTK). Residues 1090 to 1104 (KLTRWFKKKKETGGS) show a composition bias toward basic residues.

Stimulates the GTPase activity of BUD1/RSR1. Participates in the regulation of bud-site selection. This Saccharomyces cerevisiae (strain ATCC 204508 / S288c) (Baker's yeast) protein is Inhibitory regulator protein BUD2/CLA2 (BUD2).